The primary structure comprises 138 residues: uncharacterized protein (138 aa).

A run of 2 helical transmembrane segments spans residues 1–21 and 46–66; these read MEIG…EAIV and YAFI…HKFV.

It localises to the cell membrane. This is an uncharacterized protein from Methanocaldococcus jannaschii (strain ATCC 43067 / DSM 2661 / JAL-1 / JCM 10045 / NBRC 100440) (Methanococcus jannaschii).